The sequence spans 173 residues: Co-chaperone protein HscB homolog (173 aa).

The region spanning 5 to 77 is the J domain; the sequence is CHYALFDLQP…PRRARYLLAI (73 aa).

It belongs to the HscB family. As to quaternary structure, interacts with HscA and stimulates its ATPase activity.

Functionally, co-chaperone involved in the maturation of iron-sulfur cluster-containing proteins. Seems to help targeting proteins to be folded toward HscA. This chain is Co-chaperone protein HscB homolog, found in Pseudomonas entomophila (strain L48).